The primary structure comprises 75 residues: UPF0270 protein PSPTO_1630 (75 aa).

Belongs to the UPF0270 family.

This chain is UPF0270 protein PSPTO_1630, found in Pseudomonas syringae pv. tomato (strain ATCC BAA-871 / DC3000).